A 98-amino-acid polypeptide reads, in one-letter code: Large ribosomal subunit protein uL23 (98 aa).

Belongs to the universal ribosomal protein uL23 family. Part of the 50S ribosomal subunit. Contacts protein L29, and trigger factor when it is bound to the ribosome.

Functionally, one of the early assembly proteins it binds 23S rRNA. One of the proteins that surrounds the polypeptide exit tunnel on the outside of the ribosome. Forms the main docking site for trigger factor binding to the ribosome. The sequence is that of Large ribosomal subunit protein uL23 from Bifidobacterium longum (strain DJO10A).